Reading from the N-terminus, the 94-residue chain is Protein RESPONSE TO LOW SULFUR 1 (94 aa).

A coiled-coil region spans residues 8-35 (VTVAAEEMDELRRRNIELSREVAEMKTE).

This Arabidopsis thaliana (Mouse-ear cress) protein is Protein RESPONSE TO LOW SULFUR 1.